The chain runs to 230 residues: Cell division ATP-binding protein FtsE (230 aa).

An ABC transporter domain is found at 4 to 229 (IEMRDVVKKY…DESKGEYGYD (226 aa)). 37 to 44 (GPSGAGKS) provides a ligand contact to ATP.

This sequence belongs to the ABC transporter superfamily. In terms of assembly, homodimer. Interacts with FtsX; forms a membrane-associated complex. Interacts with pcsB.

Its subcellular location is the cell membrane. The enzyme catalyses ATP + H2O = ADP + phosphate + H(+). Its function is as follows. Part of the ABC transporter FtsEX involved in cellular division. Has ATPase activity. Essential for cell division and viability. This Streptococcus pneumoniae serotype 2 (strain D39 / NCTC 7466) protein is Cell division ATP-binding protein FtsE.